Reading from the N-terminus, the 472-residue chain is Ribulose bisphosphate carboxylase large chain 1 (472 aa).

Asn-115 and Thr-165 together coordinate substrate. Catalysis depends on Lys-167, which acts as the Proton acceptor. Lys-169 is a binding site for substrate. Lys-193, Asp-195, and Glu-196 together coordinate Mg(2+). Lys-193 carries the post-translational modification N6-carboxylysine. Residue His-286 is the Proton acceptor of the active site. Residues Arg-287, His-319, and Ser-371 each coordinate substrate.

Belongs to the RuBisCO large chain family. Type I subfamily. Heterohexadecamer of 8 large chains and 8 small chains. Requires Mg(2+) as cofactor.

It carries out the reaction 2 (2R)-3-phosphoglycerate + 2 H(+) = D-ribulose 1,5-bisphosphate + CO2 + H2O. It catalyses the reaction D-ribulose 1,5-bisphosphate + O2 = 2-phosphoglycolate + (2R)-3-phosphoglycerate + 2 H(+). RuBisCO catalyzes two reactions: the carboxylation of D-ribulose 1,5-bisphosphate, the primary event in carbon dioxide fixation, as well as the oxidative fragmentation of the pentose substrate. Both reactions occur simultaneously and in competition at the same active site. The polypeptide is Ribulose bisphosphate carboxylase large chain 1 (Allochromatium vinosum (strain ATCC 17899 / DSM 180 / NBRC 103801 / NCIMB 10441 / D) (Chromatium vinosum)).